A 545-amino-acid chain; its full sequence is Serine/threonine-protein kinase PAK 1 (545 aa).

Residues 1-77 (MSNNGLDIQD…KEKERPEISL (77 aa)) are disordered. Residue S2 is modified to N-acetylserine. Phosphoserine; by PKB and autocatalysis is present on S21. Position 57 is a phosphoserine; by autocatalysis (S57). Basic and acidic residues predominate over residues 68–77 (KEKERPEISL). The segment at 70 to 140 (KERPEISLPS…YNSKKTSNSQ (71 aa)) is autoregulatory region. Positions 75–88 (ISLPSDFEHTIHVG) constitute a CRIB domain. The tract at residues 75 to 105 (ISLPSDFEHTIHVGFDAVTGEFTGMPEQWAR) is GTPase-binding. T84 carries the phosphothreonine; by OXSR1 modification. S115 carries the phosphoserine modification. 2 positions are modified to phosphotyrosine: Y131 and Y142. A Phosphoserine; by autocatalysis modification is found at S144. At S149 the chain carries Phosphoserine. Residue Y153 is modified to Phosphotyrosine; by JAK2. Positions 159 to 198 (LNVKAVSETPAVPPVSEDEDDDDDDATPPPVIAPRPEHTK) are disordered. At S174 the chain carries Phosphoserine. Residues 174-184 (SEDEDDDDDDA) are compositionally biased toward acidic residues. At T185 the chain carries Phosphothreonine. S199 carries the post-translational modification Phosphoserine; by autocatalysis. Y201 carries the post-translational modification Phosphotyrosine; by JAK2. At S204 the chain carries Phosphoserine. Residues 211 to 251 (VTPTRDVATSPISPTENNTTPPDALTRNTEKQKKKPKMSDE) are disordered. Residues T212 and T219 each carry the phosphothreonine modification. Residues S220 and S223 each carry the phosphoserine modification. Residues 220–231 (SPISPTENNTTP) are compositionally biased toward polar residues. Residues T225, T229, and T230 each carry the phosphothreonine modification. In terms of domain architecture, Protein kinase spans 270-521 (YTRFEKIGQG…AKELLQHQFL (252 aa)). Residue 276–284 (IGQGASGTV) coordinates ATP. Y285 is subject to Phosphotyrosine; by JAK2. ATP is bound by residues K299 and 345-347 (EYL). D389 functions as the Proton acceptor in the catalytic mechanism. T423 carries the post-translational modification Phosphothreonine; by autocatalysis, BRSK2 and PDPK1.

It belongs to the protein kinase superfamily. STE Ser/Thr protein kinase family. STE20 subfamily. In terms of assembly, homodimer; homodimerization results in autoinhibition. Active as monomer. Interacts with GIT1. Component of cytoplasmic complexes, which also contains PXN, ARHGEF7 and GIT1. Interacts with NISCH. Interacts with DVL1; mediates the formation of a DVL1, MUSK and PAK1 ternary complex involved in AChR clustering. Binds to the caspase-cleaved p110 isoform of CDC2L1 and CDC2L2, p110C, but not the full-length proteins. Interacts with ARHGEF7. Interacts tightly with GTP-bound but not GDP-bound CDC42/P21 and RAC1. Interacts with SCRIB. Interacts with PDPK1. Interacts (via kinase domain) with RAF1. Interacts with NCK1 and NCK2. Interacts with TBCB. Interacts with BRSK2. Interacts with SNAI1. Interacts with CIB1 isoform 2. Interacts with CIB1 (via N-terminal region); the interaction is direct, promotes PAK1 activity and occurs in a calcium-dependent manner. Interacts with INPP5K. Interacts with gamma-tubulin. Interacts with RHOU; the interaction promotes PAK1 activation. It depends on Mg(2+) as a cofactor. In terms of processing, autophosphorylated in trans, meaning that in a dimer, one kinase molecule phosphorylates the other one. Activated by autophosphorylation at Thr-423 in response to a conformation change, triggered by interaction with GTP-bound CDC42 or RAC1. Activated by phosphorylation at Thr-423 by BRSK2 and by PDPK1. Phosphorylated by JAK2 in response to PRL; this increases PAK1 kinase activity. Phosphorylated at Ser-21 by PKB/AKT; this reduces interaction with NCK1 and association with focal adhesion sites. Upon DNA damage, phosphorylated at Thr-212 and translocates to the nucleoplasm. Phosphorylated at tyrosine residues, which can be enhanced by NTN1. As to expression, overexpressed in gastric cancer cells and tissues (at protein level).

The protein resides in the cytoplasm. Its subcellular location is the cell junction. It is found in the focal adhesion. The protein localises to the cell projection. It localises to the lamellipodium. The protein resides in the cell membrane. Its subcellular location is the ruffle membrane. It is found in the invadopodium. The protein localises to the nucleus. It localises to the nucleoplasm. The protein resides in the chromosome. Its subcellular location is the cytoskeleton. It is found in the microtubule organizing center. The protein localises to the centrosome. It catalyses the reaction L-seryl-[protein] + ATP = O-phospho-L-seryl-[protein] + ADP + H(+). It carries out the reaction L-threonyl-[protein] + ATP = O-phospho-L-threonyl-[protein] + ADP + H(+). Its activity is regulated as follows. Activated by binding small G proteins. Binding of GTP-bound CDC42 or RAC1 to the autoregulatory region releases monomers from the autoinhibited dimer, and enables activation by phosphorylation of Thr-423. Phosphorylation of Thr-84 by OXSR1 inhibits activation. Functionally, protein kinase involved in intracellular signaling pathways downstream of integrins and receptor-type kinases that plays an important role in cytoskeleton dynamics, in cell adhesion, migration, proliferation, apoptosis, mitosis, and in vesicle-mediated transport processes. Can directly phosphorylate BAD and protects cells against apoptosis. Activated by interaction with CDC42 and RAC1. Functions as a GTPase effector that links the Rho-related GTPases CDC42 and RAC1 to the JNK MAP kinase pathway. Phosphorylates and activates MAP2K1, and thereby mediates activation of downstream MAP kinases. Involved in the reorganization of the actin cytoskeleton, actin stress fibers and of focal adhesion complexes. Phosphorylates the tubulin chaperone TBCB and thereby plays a role in the regulation of microtubule biogenesis and organization of the tubulin cytoskeleton. Plays a role in the regulation of insulin secretion in response to elevated glucose levels. Part of a ternary complex that contains PAK1, DVL1 and MUSK that is important for MUSK-dependent regulation of AChR clustering during the formation of the neuromuscular junction (NMJ). Activity is inhibited in cells undergoing apoptosis, potentially due to binding of CDC2L1 and CDC2L2. Phosphorylates MYL9/MLC2. Phosphorylates RAF1 at 'Ser-338' and 'Ser-339' resulting in: activation of RAF1, stimulation of RAF1 translocation to mitochondria, phosphorylation of BAD by RAF1, and RAF1 binding to BCL2. Phosphorylates SNAI1 at 'Ser-246' promoting its transcriptional repressor activity by increasing its accumulation in the nucleus. In podocytes, promotes NR3C2 nuclear localization. Required for atypical chemokine receptor ACKR2-induced phosphorylation of LIMK1 and cofilin (CFL1) and for the up-regulation of ACKR2 from endosomal compartment to cell membrane, increasing its efficiency in chemokine uptake and degradation. In synapses, seems to mediate the regulation of F-actin cluster formation performed by SHANK3, maybe through CFL1 phosphorylation and inactivation. Plays a role in RUFY3-mediated facilitating gastric cancer cells migration and invasion. In response to DNA damage, phosphorylates MORC2 which activates its ATPase activity and facilitates chromatin remodeling. In neurons, plays a crucial role in regulating GABA(A) receptor synaptic stability and hence GABAergic inhibitory synaptic transmission through its role in F-actin stabilization. In hippocampal neurons, necessary for the formation of dendritic spines and excitatory synapses; this function is dependent on kinase activity and may be exerted by the regulation of actomyosin contractility through the phosphorylation of myosin II regulatory light chain (MLC). Along with GIT1, positively regulates microtubule nucleation during interphase. Phosphorylates FXR1, promoting its localization to stress granules and activity. Phosphorylates ILK on 'Thr-173' and 'Ser-246', promoting nuclear export of ILK. This Homo sapiens (Human) protein is Serine/threonine-protein kinase PAK 1.